A 508-amino-acid polypeptide reads, in one-letter code: Probable cytosol aminopeptidase (508 aa).

Residues Lys274 and Asp279 each contribute to the Mn(2+) site. Residue Lys286 is part of the active site. Residues Asp297, Asp356, and Glu358 each coordinate Mn(2+). Arg360 is an active-site residue.

Belongs to the peptidase M17 family. Mn(2+) is required as a cofactor.

Its subcellular location is the cytoplasm. The catalysed reaction is Release of an N-terminal amino acid, Xaa-|-Yaa-, in which Xaa is preferably Leu, but may be other amino acids including Pro although not Arg or Lys, and Yaa may be Pro. Amino acid amides and methyl esters are also readily hydrolyzed, but rates on arylamides are exceedingly low.. It catalyses the reaction Release of an N-terminal amino acid, preferentially leucine, but not glutamic or aspartic acids.. In terms of biological role, presumably involved in the processing and regular turnover of intracellular proteins. Catalyzes the removal of unsubstituted N-terminal amino acids from various peptides. This chain is Probable cytosol aminopeptidase, found in Paraburkholderia phytofirmans (strain DSM 17436 / LMG 22146 / PsJN) (Burkholderia phytofirmans).